We begin with the raw amino-acid sequence, 1160 residues long: ATP-dependent helicase/deoxyribonuclease subunit B (1160 aa).

It belongs to the helicase family. AddB/RexB type 2 subfamily. As to quaternary structure, heterodimer of AddA and RexB. The cofactor is Mg(2+).

The heterodimer acts as both an ATP-dependent DNA helicase and an ATP-dependent, dual-direction single-stranded exonuclease. Recognizes the chi site generating a DNA molecule suitable for the initiation of homologous recombination. This subunit has 5' -&gt; 3' nuclease activity but not helicase activity. The polypeptide is ATP-dependent helicase/deoxyribonuclease subunit B (Lactobacillus helveticus (strain DPC 4571)).